Reading from the N-terminus, the 306-residue chain is Methionyl-tRNA formyltransferase (306 aa).

110-113 contributes to the (6S)-5,6,7,8-tetrahydrofolate binding site; the sequence is SLLP.

This sequence belongs to the Fmt family.

It catalyses the reaction L-methionyl-tRNA(fMet) + (6R)-10-formyltetrahydrofolate = N-formyl-L-methionyl-tRNA(fMet) + (6S)-5,6,7,8-tetrahydrofolate + H(+). Functionally, attaches a formyl group to the free amino group of methionyl-tRNA(fMet). The formyl group appears to play a dual role in the initiator identity of N-formylmethionyl-tRNA by promoting its recognition by IF2 and preventing the misappropriation of this tRNA by the elongation apparatus. This chain is Methionyl-tRNA formyltransferase, found in Brucella ovis (strain ATCC 25840 / 63/290 / NCTC 10512).